The sequence spans 365 residues: 3-isopropylmalate dehydrogenase (365 aa).

Substrate is bound by residues Arg96, Arg106, Arg134, and Asp224. Residues Asp224, Asp248, and Asp252 each coordinate Mg(2+). Residue 288–300 (GSAPTIAKQNIAN) participates in NAD(+) binding.

It belongs to the isocitrate and isopropylmalate dehydrogenases family. LeuB type 1 subfamily. Homodimer. It depends on Mg(2+) as a cofactor. Mn(2+) is required as a cofactor.

It is found in the cytoplasm. The enzyme catalyses (2R,3S)-3-isopropylmalate + NAD(+) = 4-methyl-2-oxopentanoate + CO2 + NADH. It participates in amino-acid biosynthesis; L-leucine biosynthesis; L-leucine from 3-methyl-2-oxobutanoate: step 3/4. Functionally, catalyzes the oxidation of 3-carboxy-2-hydroxy-4-methylpentanoate (3-isopropylmalate) to 3-carboxy-4-methyl-2-oxopentanoate. The product decarboxylates to 4-methyl-2 oxopentanoate. This Dehalococcoides mccartyi (strain ATCC BAA-2266 / KCTC 15142 / 195) (Dehalococcoides ethenogenes (strain 195)) protein is 3-isopropylmalate dehydrogenase.